Consider the following 378-residue polypeptide: Glycerate kinase (378 aa).

Belongs to the glycerate kinase type-1 family.

It carries out the reaction (R)-glycerate + ATP = (2R)-3-phosphoglycerate + ADP + H(+). The sequence is that of Glycerate kinase (glxK) from Haemophilus influenzae (strain ATCC 51907 / DSM 11121 / KW20 / Rd).